The chain runs to 58 residues: Pepsin-1 (58 aa).

A propeptide spans 1–41 (LLQVPLEKGQSAREYLQEQGLWEQYRLKYPYNPMAKFDPSF) (activation peptide).

It belongs to the peptidase A1 family.

This Thunnus orientalis (North Pacific bluefin tuna) protein is Pepsin-1.